The primary structure comprises 120 residues: uncharacterized protein (120 aa).

A signal peptide spans 1 to 18; sequence MRSWIPLLVLFAVLAVFA. A disordered region spans residues 20–99; sequence AGKSSESDES…GDNRVKRDGL (80 aa).

This is an uncharacterized protein from Caenorhabditis elegans.